We begin with the raw amino-acid sequence, 403 residues long: Imidazolonepropionase (403 aa).

Fe(3+)-binding residues include H69 and H71. The Zn(2+) site is built by H69 and H71. Positions 78, 141, and 174 each coordinate 4-imidazolone-5-propanoate. Y141 provides a ligand contact to N-formimidoyl-L-glutamate. H239 contributes to the Fe(3+) binding site. H239 provides a ligand contact to Zn(2+). Q242 is a 4-imidazolone-5-propanoate binding site. D314 contacts Fe(3+). D314 lines the Zn(2+) pocket. 2 residues coordinate N-formimidoyl-L-glutamate: N316 and G318. Residue S319 participates in 4-imidazolone-5-propanoate binding.

The protein belongs to the metallo-dependent hydrolases superfamily. HutI family. Zn(2+) is required as a cofactor. Fe(3+) serves as cofactor.

The protein resides in the cytoplasm. The enzyme catalyses 4-imidazolone-5-propanoate + H2O = N-formimidoyl-L-glutamate. The protein operates within amino-acid degradation; L-histidine degradation into L-glutamate; N-formimidoyl-L-glutamate from L-histidine: step 3/3. Functionally, catalyzes the hydrolytic cleavage of the carbon-nitrogen bond in imidazolone-5-propanoate to yield N-formimidoyl-L-glutamate. It is the third step in the universal histidine degradation pathway. This Legionella pneumophila (strain Paris) protein is Imidazolonepropionase.